Reading from the N-terminus, the 775-residue chain is MATPDSLALFTGLGLSENKARETLKNEALSTQLREAATQAHQILGSTIDKATGVLLYDLVSRLRDTRRRSFLVSYIANKKIHTGLQLSAALEYVRSHPQDPIDTKDFEQECGVGVVVTPEQIEEAVESTINKHQLQLLAERYRFNMGLLMGEARAALRWADGKMIKNEVDMQVLHLLGPKMEADLVKKPKVAKARLEETDRKTAKDVVEKGEVAGQTLSLMEQLRGEALKFHKPGENYKTPGYVITPYTMDLLKQHLEITGGQVRTRFPPEPNGILHIGHAKAINFNFGYAKANNGICFLRFDDTNPEKEEAKFFTAIYDMVTWLGYTPYKVTYASDYFDQLYAWAVELIHGGLAYVCHQRVEELKGHNPLPSPWRDRPKEESLLLFEAMRKGKFAEGEATLRMKLVMEDGKMDPVAYRVKYTPHHRTGDKWCIYPTYDYTHCLCDSIEHITHSLCTKEFQARRSSYFWLCNALKVYCPVQWEYGRLNLHYAVVSKRKILQLVAAGAVRDWDDPRLFTLTALRRRGFPPEAINNFCARVGVTVAQTTMEPHLLEACVRDVLNDAAPRAMAVLEPLQVVITNFPAPKPLDIRVPNFPADETKGFHQVPFASTVFIERSDFKEESEPGYKRLASGQPVGLRHTGYVIELQNIVRGSSGCVERLEVTCRRADAGEKPKAFIHWVSQPLVCEIRLYECLFQHKNPEDPVEVPGGFLSDLNPASLQVVEGALVDCSVALAKPFDKFQFERLGYFSVDPDSHQGQIVFNRTVTLKEDPGKI.

Residue alanine 2 is modified to N-acetylalanine. A Phosphoserine modification is found at serine 70. ATP-binding positions include 271 to 273 (EPN) and 277 to 283 (HIGHAKA). Residue aspartate 303 coordinates L-glutamine. Lysine 309 carries the post-translational modification N6-acetyllysine. Position 438 (tyrosine 438) interacts with L-glutamine. ATP contacts are provided by residues threonine 457, 486–487 (RL), and 494–496 (VSK). At serine 495 the chain carries Phosphoserine.

It belongs to the class-I aminoacyl-tRNA synthetase family. In terms of assembly, monomer. Part of a multisubunit complex that groups tRNA ligases for Arg (RARS1), Asp (DARS1), Gln (QARS1), Ile (IARS1), Leu (LARS1), Lys (KARS1), Met (MARS1) the bifunctional ligase for Glu and Pro (EPRS1) and the auxiliary subunits AIMP1/p43, AIMP2/p38 and EEF1E1/p18. Interacts with RARS1. Part of a complex composed of RARS1, QARS1 and AIMP1.

The protein localises to the cytoplasm. The protein resides in the cytosol. The enzyme catalyses tRNA(Gln) + L-glutamine + ATP = L-glutaminyl-tRNA(Gln) + AMP + diphosphate. Glutamine--tRNA ligase. Plays a critical role in brain development. The chain is Glutamine--tRNA ligase (Qars1) from Mus musculus (Mouse).